Reading from the N-terminus, the 626-residue chain is Chaperone protein HtpG (626 aa).

Residues 1-343 (MHKQTLSFQA…SADLPLNVSR (343 aa)) are a; substrate-binding. The segment at 344–558 (ELLQESRAVK…DGDMSTQLAR (215 aa)) is b. The tract at residues 559 to 626 (MLKQAGQAVP…YVKRVNALLV (68 aa)) is c.

Belongs to the heat shock protein 90 family. As to quaternary structure, homodimer.

It localises to the cytoplasm. Functionally, molecular chaperone. Has ATPase activity. This Polaromonas sp. (strain JS666 / ATCC BAA-500) protein is Chaperone protein HtpG.